The primary structure comprises 592 residues: Putative RING finger protein ORF9 (592 aa).

Residues 12 to 49 form an RING-type zinc finger; sequence CCICLEEDIERVDTIPCQHTVCRPCYLKPMINKCPVCR. A coiled-coil region spans residues 414-441; the sequence is WELIKREELLQRRYKREEQNLKYTSNRL.

In Ostreid herpesvirus 1 (isolate France) (OsHV-1), this protein is Putative RING finger protein ORF9.